Here is a 277-residue protein sequence, read N- to C-terminus: MKIIETKNLNYSYTQSSIRSIENVNFSVLDGEWITIVGKNGSGKSTLIRLLDGLLKADSGKIIIDGLTLSEKTLWEIRKKIGIVFQNPDNQFVSGSVIEDVAFGMENYQIPQEEMLVRAQQALKTVGMIDFAEKSPVRLSGGQKQRVAIAGVLAIQPKILILDEAASMLDPDGRDEVWQTIKKLKEQQNLTVISVNHDLNELNLSDRVILLNDGKIAADTKINQLFSDSELLSKNDLKLPFLQQLQKDLRESGINFTQEYNHQRELVNFLWKSISGT.

An ABC transporter domain is found at 4–238 (IETKNLNYSY…SELLSKNDLK (235 aa)). ATP is bound at residue 38–45 (GKNGSGKS).

Belongs to the ABC transporter superfamily. Energy-coupling factor EcfA family. Forms a stable energy-coupling factor (ECF) transporter complex composed of 2 membrane-embedded substrate-binding proteins (S component), 2 ATP-binding proteins (A component) and 2 transmembrane proteins (T component).

The protein resides in the cell membrane. Its function is as follows. ATP-binding (A) component of a common energy-coupling factor (ECF) ABC-transporter complex. Unlike classic ABC transporters this ECF transporter provides the energy necessary to transport a number of different substrates. This chain is Energy-coupling factor transporter ATP-binding protein EcfA1, found in Oenococcus oeni (strain ATCC BAA-331 / PSU-1).